Reading from the N-terminus, the 1136-residue chain is Mitochondrial 3' processome subunit 3 (1136 aa).

A mitochondrion-targeting transit peptide spans 1–97 (MKKAWAQLER…RGLVCTTVGD (97 aa)).

In terms of assembly, component of the mitochondrial 3' processome (MPsome) complex composed at least of terminal uridylyltransferase KRET1/TUT1, 3'-5' exonuclease DSS1, MPSS1, MPSS2 and MPSS3. Within the complex, interacts with KRET1.

It is found in the mitochondrion. Functionally, as part of the mitochondrial 3' processome (MPsome), involved in the maturation of guided RNA (gRNA) precursors. In Trypanosoma brucei brucei, this protein is Mitochondrial 3' processome subunit 3.